The following is a 184-amino-acid chain: TRAF-interacting protein with FHA domain-containing protein A (184 aa).

The residue at position 9 (Thr-9) is a Phosphothreonine. The FHA domain occupies 47-103 (VKFGRNSNMCQYTFQDKQVSRIQFVLQPFKQFNSSVLSFEIKNMSKKTSLMVDNQEL). The disordered stretch occupies residues 152–184 (NNWPTQNPIPEDGMYSSYFTHRSSPSEMDENEL). The segment covering 168–177 (SYFTHRSSPS) has biased composition (polar residues).

It belongs to the TIFA family. As to quaternary structure, homooligomer; homooligomerizes following phosphorylation at Thr-9. Interacts with IRAK1, TRAF2 and TRAF6. Interacts with TIFAB; binding to TIFAB inhibits TRAF6 activation, possibly by inducing a conformational change in TIFA. Interacts with ZCCHC11; binding to ZCCHC11 suppresses the TRAF6-dependent activation of NF-kappa-B. Phosphorylated at Thr-9 following detection of ADP-D-glycero-beta-D-manno-heptose (ADP-Heptose) by ALPK1. Phosphorylation at Thr-9 by ALPK1 leads to the formation of an intermolecular binding between the FHA domain and phosphorylated Thr-9, promoting TIFA oligomerization and TIFA-mediated NF-kappa-B activation. As to expression, highly expressed in the spleen and at lower levels in heart, brain, lung, liver, kidney and testes.

The protein resides in the cytoplasm. In terms of biological role, adapter molecule that plays a key role in the activation of pro-inflammatory NF-kappa-B signaling following detection of bacterial pathogen-associated molecular pattern metabolites (PAMPs). Promotes activation of an innate immune response by inducing the oligomerization and polyubiquitination of TRAF6, which leads to the activation of TAK1 and IKK through a proteasome-independent mechanism. TIFA-dependent innate immune response is triggered by ADP-D-glycero-beta-D-manno-heptose (ADP-Heptose), a potent PAMP present in all Gram-negative and some Gram-positive bacteria: ADP-Heptose is recognized by ALPK1, which phosphorylates TIFA at Thr-9, leading to TIFA homooligomerization and subsequent activation of pro-inflammatory NF-kappa-B signaling. The protein is TRAF-interacting protein with FHA domain-containing protein A of Mus musculus (Mouse).